The following is a 443-amino-acid chain: EGF-containing fibulin-like extracellular matrix protein 2 (443 aa).

An N-terminal signal peptide occupies residues 1-27 (MLPFASCLPGSLLLWAFLLLLLGAASP). Glutamine 28 is modified (pyrrolidone carboxylic acid). The EGF-like 1; atypical domain occupies 36–81 (YTECTDGYEWDADSQHCRDVNECLTIPEACKGEMKCINHYGGYLCL). Disulfide bonds link cysteine 58-cysteine 121, cysteine 65-cysteine 80, cysteine 71-cysteine 109, cysteine 127-cysteine 140, cysteine 134-cysteine 149, cysteine 151-cysteine 162, cysteine 168-cysteine 177, cysteine 173-cysteine 186, cysteine 188-cysteine 201, cysteine 207-cysteine 217, cysteine 213-cysteine 226, cysteine 228-cysteine 241, cysteine 247-cysteine 258, cysteine 254-cysteine 267, cysteine 269-cysteine 281, cysteine 287-cysteine 300, cysteine 294-cysteine 309, and cysteine 315-cysteine 327. Residues 91 to 117 (LHGEGPPPPAAHAQQPNPCPQGYEPDE) are disordered. The EGF-like 2; calcium-binding domain maps to 123–163 (DVDECTQALHDCRPSQDCHNLPGSYQCTCPDGYRKIGPECV). Positions 164 to 202 (DIDECRYRYCQHRCVNLPGSFRCQCEPGFQLGPNNRSCV) constitute an EGF-like 3; calcium-binding domain. N-linked (GlcNAc...) asparagine glycosylation occurs at asparagine 198. One can recognise an EGF-like 4; calcium-binding domain in the interval 203–242 (DVNECDMGAPCEQRCFNSYGTFLCRCNQGYELHRDGFSCS). The EGF-like 5; calcium-binding domain maps to 243–282 (DIDECGYSSYLCQYRCVNEPGRFSCHCPQGYQLLATRLCQ). The region spanning 283 to 328 (DIDECETGAHQCSEAQTCVNFHGGYRCVDTNRCVEPYVQVSDNRCL) is the EGF-like 6; calcium-binding domain. Residue asparagine 394 is glycosylated (N-linked (GlcNAc...) asparagine).

The protein belongs to the fibulin family. Homodimer; disulfide-linked. Multimer; allows heparin binding. Monomer. Binds preferentially to p53 mutants. Interacts with FBN1 (via N-terminal domain); this interaction inhibits EFEMP2 binding to LOX and ELN. Interacts with ELN with moderate affinity; this interaction regulates ELN self-assembly maturation stage. Interacts with PCOLCE. Interacts with collagen type IV trimer (COL4A1-COL4A1-COL4A2), NID2 and moderately with COL15A1-derived endostatin. Interacts with EMILIN1; this interaction promotes the incorporation of EFEMP2 into the extracellular matrix. Interacts with LTBP4; the LTBP4 long form (LTBP4L) has a stronger binding affinity than the LTBP4 short form and the LTBP4 long form promotes fibrillar deposition of EFEMP2. Interacts with LOX (via propeptide); this interaction is strong and facilitates formation of ternary complexes with ELN during elastic fiber assembly; this interaction limits interaction of EFEMP2 with FBLN5. Interacts with PITX2. Interacts with FBLN5 with moderate affinity. Interacts with LOXL1 (via propeptide), LTBP1 and TGFB1 stronger than with LOXL2 and LTBP3. In terms of processing, N-glycosylated; contains mostly complex-type glycans. Not O-glycosylated. Post-translationally, cleaved by ELANE; produces a 50-55 kDa fragment. Cleaved by MMP2 and MMP9; produces several fragments. As to expression, expressed in elastic fibers of the skin, near the dermal-epidermal junction, surrounding the hair follicles and throughout the dermis. Expressed in tendon around tenocytes. Prominently expressed in cartilage, bone, perichondrium and ligaments. Also detected in bone marrow stroma. Expressed in aorta, lung, and esophagus.

The protein localises to the secreted. The protein resides in the extracellular space. It localises to the extracellular matrix. It is found in the basement membrane. Its function is as follows. Plays a crucial role in elastic fiber formation in tissue, and in the formation of ultrastructural connections between elastic laminae and smooth muscle cells in the aorta, therefore participates in terminal differentiation and maturation of smooth muscle cell (SMC) and in the mechanical properties and wall integrity maintenance of the aorta. In addition, is involved in the control of collagen fibril assembly in tissue throught proteolytic activation of LOX leading to cross- linking of collagen and elastin. Also promotes ELN coacervation and participates in the deposition of ELN coacervates on to microfibrils but also regulates ELN cross- linking through LOX interaction. Moreover adheres to the cells through heparin binding in a calcium-dependent manner and regulates vascularlar smooth muscle cells proliferation through angiotensin signaling. This Mus musculus (Mouse) protein is EGF-containing fibulin-like extracellular matrix protein 2.